Here is a 419-residue protein sequence, read N- to C-terminus: Appendage-associated protein (419 aa).

An N-terminal signal peptide occupies residues 1–39 (MIVTYGTVGCPVSRGGSPGCGRRIAEELRLAEDARLRLA). Residues 232-262 (ERQKAQRRREERAAKAREELRKELNDIDAKW) are a coiled coil.

The protein localises to the secreted. In terms of biological role, associates with actin filament appendages that are formed in the inclusion appendages of the parasitophorous vacuole during infection of the host erythrocyte. The sequence is that of Appendage-associated protein from Anaplasma marginale (strain St. Maries).